A 721-amino-acid chain; its full sequence is K(+)-insensitive pyrophosphate-energized proton pump (721 aa).

5 helical membrane passes run Leu-8 to Val-28, Tyr-57 to Met-77, Phe-82 to Leu-102, Val-136 to Phe-156, and Leu-168 to Ile-188. Substrate is bound at residue Lys-191. Residues Asp-194, Asp-198, Asn-221, and Asp-224 each coordinate Mg(2+). Transmembrane regions (helical) follow at residues Ala-247–Phe-267, Ile-294–Phe-314, Ala-323–Ile-343, Tyr-374–Ile-394, and Ala-416–Ile-436. Asp-446 lines the Mg(2+) pocket. The next 4 helical transmembrane spans lie at Ala-483–Val-503, Leu-527–Ser-547, Phe-599–Trp-619, and Ala-621–Ala-641. The Ca(2+) site is built by Asp-648, Asp-672, and Asp-676. A substrate-binding site is contributed by Lys-679. The helical transmembrane segment at Val-698–Leu-718 threads the bilayer.

The protein belongs to the H(+)-translocating pyrophosphatase (TC 3.A.10) family. K(+)-insensitive subfamily. In terms of assembly, homodimer. It depends on Mg(2+) as a cofactor.

It is found in the cell membrane. The enzyme catalyses diphosphate + H2O + H(+)(in) = 2 phosphate + 2 H(+)(out). In terms of biological role, proton pump that utilizes the energy of pyrophosphate hydrolysis as the driving force for proton movement across the membrane. Generates a proton motive force. This is K(+)-insensitive pyrophosphate-energized proton pump from Pyrobaculum aerophilum (strain ATCC 51768 / DSM 7523 / JCM 9630 / CIP 104966 / NBRC 100827 / IM2).